We begin with the raw amino-acid sequence, 239 residues long: Calcium load-activated calcium channel (239 aa).

Residues 1-55 are Lumenal-facing; the sequence is MPRKRKCDLRAVRVGLLLGGGGVYGSRFRFTFPGCRALSPWRVRVQRRRCEMSTM. The helical transmembrane segment at 56–83 threads the bilayer; that stretch reads FADTLLIVFISVCTALLAEGITWVLVYR. The stretch at 83–140 forms a coiled coil; it reads RTDKYKRLKAEVEKQSKKLEKKKETITESAGRQQKKKIERQEEKLKNNNRDLSMVRMK. Over 84-137 the chain is Cytoplasmic; it reads TDKYKRLKAEVEKQSKKLEKKKETITESAGRQQKKKIERQEEKLKNNNRDLSMV. A Phosphoserine modification is found at Ser111. A helical transmembrane segment spans residues 138 to 157; the sequence is RMKSMFAIGFCFTALMGMFN. Residues 158–171 are Lumenal-facing; sequence SIFDGRVVAKLPFT. Residues 172–181 lie within the membrane without spanning it; sequence PLSYIQGLSH. The Lumenal portion of the chain corresponds to 182–191; the sequence is RNLLGDDTTD. A helical membrane pass occupies residues 192 to 213; sequence CSFIFLYILCTMSIRQNIQKIL. The Cytoplasmic segment spans residues 214-239; sequence GLAPSRAATKQAGGFLGPPPPSGKFS. At Ser239 the chain carries Phosphoserine.

Belongs to the TMCO1 family. Homodimer and homotetramer. Homodimer under resting conditions; forms homotetramers following ER calcium overload. Component of the GET- and EMC-like (GEL) complex, composed of RAB5IF/OPTI and TMCO1. The GEL complex is part of the multi-pass translocon (MPT) complex, composed of three subcomplexes, the GEL complex (composed of RAB5IF/OPTI and TMCO1), the BOS complex (composed of NCLN/Nicalin, NOMO and TMEM147) and the PAT complex (composed of WDR83OS/Asterix and CCDC47). The MPT complex associates with the SEC61 complex. As to expression, widely expressed in adult and fetal tissues, with higher levels in thymus, prostate, testis and small intestine and lower levels in brain, placenta, lung and kidney. Present in most tissues in the eye, including the trabecular meshwork and retina (at protein level).

It localises to the endoplasmic reticulum membrane. Its subcellular location is the golgi apparatus membrane. It is found in the mitochondrion membrane. It catalyses the reaction Ca(2+)(in) = Ca(2+)(out). Its function is as follows. Endoplasmic reticulum (ER) calcium-selective channel preventing intracellular Ca2(+) stores from overfilling and maintaining calcium homeostasis in the ER. In response to endoplasmic reticulum (ER) Ca2(+) overloading, assembles into a homotetramer, forming a functional calcium-selective channel facilitating Ca2(+) release. Mediates ER Ca2(+) homeostasis in osteoblasts and plays a key role in bone formation, via the CaMKII-HDAC4-RUNX2 signaling axis. Component of the multi-pass translocon (MPT) complex that mediates insertion of multi-pass membrane proteins into the lipid bilayer of membranes. The MPT complex takes over after the SEC61 complex: following membrane insertion of the first few transmembrane segments of proteins by the SEC61 complex, the MPT complex occludes the lateral gate of the SEC61 complex to promote insertion of subsequent transmembrane regions. Within the MPT complex, the GEL subcomplex may mediate insertion of transmembrane regions into the membrane. The protein is Calcium load-activated calcium channel of Homo sapiens (Human).